The following is a 221-amino-acid chain: Ribosomal RNA small subunit methyltransferase Nep1 (221 aa).

S-adenosyl-L-methionine is bound by residues G174, G179, and 196 to 201; that span reads IGDETM.

Belongs to the class IV-like SAM-binding methyltransferase superfamily. RNA methyltransferase NEP1 family. As to quaternary structure, homodimer.

It catalyses the reaction a pseudouridine in rRNA + S-adenosyl-L-methionine = an N(1)-methylpseudouridine in rRNA + S-adenosyl-L-homocysteine + H(+). Functionally, methyltransferase involved in ribosomal biogenesis. Specifically catalyzes the N1-methylation of the pseudouridine corresponding to position 914 in M.jannaschii 16S rRNA. In Pyrobaculum islandicum (strain DSM 4184 / JCM 9189 / GEO3), this protein is Ribosomal RNA small subunit methyltransferase Nep1.